The chain runs to 651 residues: MTSPTFIRLRFAFKLSFAIVAALFLGFHLQLETPRWSVLTAAIVAAGPAFAAGGEPFSGAIRHRGWLRIIGTFIGCIGGLIIIVLTIRAPVLTLMLCCLWAGVCTWISSLVRVENSYAFGLAGYTALIIIVTTGETPLLTPQFAVERCSEIVLGIVCAVMADLLFSPRSIKQDIDRLVDKVLLDQYRLLQLCIRPAEKTDIDRAWNDLVKNTTALNGMRSYLMMESSRWQRCNRRLQVLHTESLTLITQACETYLVLANHPDILTAELKAMLSEPAPTPAEIHQRMKTLRQFIAVSHSEAIPHTISSWVGAATRYLLLAKGIHTNSSISRVEEGILAGVVPVKHVSAEGHHAMINGLRTGVATAIGGLFWLWTGWTSGAGCMVMIAVVTSLAMRTPNPRMVAIDFLLGVIMALPIGALYFMFIIPATQQSMLLLCISLGLLAFIIGIEVQKRRLGSLGTLASTINIMVLSNPMEFNVSLFLDSALGQIVGCFVSLIVLLLIRDNAKDRTGRTLLNRFVYSAVSALTTNKARRNENHLPALYQQLNQLLMMFPGDIDKYRLALTLIIAHQRLNKTEVPVNAELSAFHKQIRYTADRVINAKNSQKRRYYFARLLQELDQYQQKLVDYQSPDAVTRPVKRLADMLHKYQSALI.

11 helical membrane-spanning segments follow: residues 11–31 (FAFKLSFAIVAALFLGFHLQL), 41–61 (AAIVAAGPAFAAGGEPFSGAI), 67–87 (LRIIGTFIGCIGGLIIIVLTI), 91–111 (VLTLMLCCLWAGVCTWISSLV), 119–139 (FGLAGYTALIIIVTTGETPLL), 150–170 (EIVLGIVCAVMADLLFSPRSI), 368–388 (LFWLWTGWTSGAGCMVMIAVV), 405–425 (FLLGVIMALPIGALYFMFIIP), 429–449 (QSMLLLCISLGLLAFIIGIEV), 460–480 (LASTINIMVLSNPMEFNVSLF), and 481–501 (LDSALGQIVGCFVSLIVLLLI).

It belongs to the aromatic acid exporter ArAE (TC 2.A.85) family.

It localises to the cell inner membrane. Forms an efflux pump with AaeA. Could function as a metabolic relief valve, allowing to eliminate certain compounds when they accumulate to high levels in the cell. In Yersinia enterocolitica serotype O:8 / biotype 1B (strain NCTC 13174 / 8081), this protein is p-hydroxybenzoic acid efflux pump subunit AaeB.